The following is a 539-amino-acid chain: Nucleobase-ascorbate transporter 8 (539 aa).

The disordered stretch occupies residues M1–P20. The next 12 membrane-spanning stretches (helical) occupy residues I44–M64, L79–T99, L101–A121, I141–W161, F167–Q187, F189–F209, F229–G249, I295–A315, V368–G388, A399–I421, F433–T453, and N470–L490.

This sequence belongs to the nucleobase:cation symporter-2 (NCS2) (TC 2.A.40) family. Highly expressed in ovules, endosperm and embryo.

Its subcellular location is the cell membrane. The polypeptide is Nucleobase-ascorbate transporter 8 (NAT8) (Arabidopsis thaliana (Mouse-ear cress)).